The sequence spans 449 residues: MNVLTNFPYQHVLVLGLAKSGTAAANVLLQNHIQVTINDGMATLEDATVQKLQTMGAELVLGSHPISVLDGKDLIVKNPGIRYDNVIVEEAQRRGIPVISEVELVHYLTNQPVIGITGSNGKTTTTTLITEMLDRSNVSVKVAGNIGVVATEVASSLQSDEKMVMELSSFQLQGIDQLQFSTAVLLNLFEAHLDYHGSFENYVEAKCNIFKSQNKHDYLIYNADDDNVSAAIKTAEATKVPFSSSRPLADGAWMDDDFLYYKDEKIIAIRDIVLVGKHNMENILAAIATAKLNGATNEGIVQVLTTFSGVKHRLEFVGVINGRYIYNDSKATNILATKKALAAFNKNVVLLAGGLDRGNTFEELIPYLHHVKAMVVFGETAGKLKDAGVAANIPVIEKALDVQHAVEVAFALTDEQDTILLSPACASWDQYKTFEERGDMFIQALHRLK.

Residue 118 to 124 (GSNGKTT) participates in ATP binding.

Belongs to the MurCDEF family.

It is found in the cytoplasm. It catalyses the reaction UDP-N-acetyl-alpha-D-muramoyl-L-alanine + D-glutamate + ATP = UDP-N-acetyl-alpha-D-muramoyl-L-alanyl-D-glutamate + ADP + phosphate + H(+). The protein operates within cell wall biogenesis; peptidoglycan biosynthesis. Its function is as follows. Cell wall formation. Catalyzes the addition of glutamate to the nucleotide precursor UDP-N-acetylmuramoyl-L-alanine (UMA). The protein is UDP-N-acetylmuramoylalanine--D-glutamate ligase of Oceanobacillus iheyensis (strain DSM 14371 / CIP 107618 / JCM 11309 / KCTC 3954 / HTE831).